A 273-amino-acid polypeptide reads, in one-letter code: 4-hydroxy-tetrahydrodipicolinate reductase (273 aa).

Residue 12–17 (GAMGRM) participates in NAD(+) binding. Lys39 contributes to the NADP(+) binding site. NAD(+)-binding positions include 102-104 (GTT) and 126-129 (ASNF). His159 (proton donor/acceptor) is an active-site residue. His160 lines the (S)-2,3,4,5-tetrahydrodipicolinate pocket. The Proton donor role is filled by Lys163. 169 to 170 (GT) is a (S)-2,3,4,5-tetrahydrodipicolinate binding site.

It belongs to the DapB family. In terms of assembly, homotetramer.

It is found in the cytoplasm. It carries out the reaction (S)-2,3,4,5-tetrahydrodipicolinate + NAD(+) + H2O = (2S,4S)-4-hydroxy-2,3,4,5-tetrahydrodipicolinate + NADH + H(+). The catalysed reaction is (S)-2,3,4,5-tetrahydrodipicolinate + NADP(+) + H2O = (2S,4S)-4-hydroxy-2,3,4,5-tetrahydrodipicolinate + NADPH + H(+). It functions in the pathway amino-acid biosynthesis; L-lysine biosynthesis via DAP pathway; (S)-tetrahydrodipicolinate from L-aspartate: step 4/4. Its function is as follows. Catalyzes the conversion of 4-hydroxy-tetrahydrodipicolinate (HTPA) to tetrahydrodipicolinate. The chain is 4-hydroxy-tetrahydrodipicolinate reductase from Buchnera aphidicola subsp. Schizaphis graminum (strain Sg).